Here is a 302-residue protein sequence, read N- to C-terminus: N-acetylmuramic acid 6-phosphate etherase (302 aa).

The 164-residue stretch at 57-220 (VSEKLKNNGR…TTAVMIKLGK (164 aa)) folds into the SIS domain. Residue glutamate 85 is the Proton donor of the active site. Glutamate 116 is an active-site residue.

Belongs to the GCKR-like family. MurNAc-6-P etherase subfamily. As to quaternary structure, homodimer.

It catalyses the reaction N-acetyl-D-muramate 6-phosphate + H2O = N-acetyl-D-glucosamine 6-phosphate + (R)-lactate. The protein operates within amino-sugar metabolism; N-acetylmuramate degradation. Functionally, specifically catalyzes the cleavage of the D-lactyl ether substituent of MurNAc 6-phosphate, producing GlcNAc 6-phosphate and D-lactate. This is N-acetylmuramic acid 6-phosphate etherase from Clostridium acetobutylicum (strain ATCC 824 / DSM 792 / JCM 1419 / IAM 19013 / LMG 5710 / NBRC 13948 / NRRL B-527 / VKM B-1787 / 2291 / W).